Here is a 145-residue protein sequence, read N- to C-terminus: Beta sliding clamp (145 aa).

This sequence belongs to the beta sliding clamp family. As to quaternary structure, forms a ring-shaped head-to-tail homodimer around DNA which binds and tethers DNA polymerases and other proteins to the DNA. The DNA replisome complex has a single clamp-loading complex (3 tau and 1 each of delta, delta', psi and chi subunits) which binds 3 Pol III cores (1 core on the leading strand and 2 on the lagging strand) each with a beta sliding clamp dimer. Additional proteins in the replisome are other copies of gamma, psi and chi, Ssb, DNA helicase and RNA primase.

It localises to the cytoplasm. Functionally, confers DNA tethering and processivity to DNA polymerases and other proteins. Acts as a clamp, forming a ring around DNA (a reaction catalyzed by the clamp-loading complex) which diffuses in an ATP-independent manner freely and bidirectionally along dsDNA. Initially characterized for its ability to contact the catalytic subunit of DNA polymerase III (Pol III), a complex, multichain enzyme responsible for most of the replicative synthesis in bacteria; Pol III exhibits 3'-5' exonuclease proofreading activity. The beta chain is required for initiation of replication as well as for processivity of DNA replication. The polypeptide is Beta sliding clamp (dnaN) (Vibrio harveyi (Beneckea harveyi)).